Consider the following 1261-residue polypeptide: Apoptotic protease-activating factor 1 (1261 aa).

The region spanning 1–90 (MEERARSRLL…GDLASLLHSD (90 aa)) is the CARD domain. The 312-residue stretch at 106 to 417 (VSPSVQAILS…LELEEVEDVL (312 aa)) folds into the NB-ARC domain. An ATP-binding site is contributed by 154–161 (GMAGSGKS). WD repeat units lie at residues 615-654 (PHQG…KLLE), 657-696 (AHEE…LIRE), 700-743 (EHEE…SQNT), 746-785 (GHME…EWKS), 798-836 (EIKA…LLLK), 840-879 (SRLS…KKAE), 882-921 (GHLS…TSSA), 964-1003 (ELSS…ASVK), 1006-1045 (GHTK…CMVL), 1047-1088 (GHME…MLQD), 1091-1130 (CHEG…MLFL), 1133-1172 (GHKD…LLKI), and 1184-1223 (YHAG…QTFY).

Monomer. Oligomerizes upon binding of cytochrome c and dATP.

It is found in the cytoplasm. Its function is as follows. Oligomeric Apaf-1 mediates the cytochrome c-dependent autocatalytic activation of pro-caspase-9 (Apaf-3), leading to the activation of caspase-3 and apoptosis. This activation requires ATP. The polypeptide is Apoptotic protease-activating factor 1 (apaf1) (Danio rerio (Zebrafish)).